The sequence spans 391 residues: Inositol-tetrakisphosphate 1-kinase 2 (391 aa).

Lysine 90 and lysine 132 together coordinate 1D-myo-inositol 1,3,4-trisphosphate. Residues arginine 167 and lysine 217 each contribute to the ATP site. The ATP-grasp domain occupies lysine 178–tyrosine 384. Histidine 228 and lysine 260 together coordinate 1D-myo-inositol 1,3,4-trisphosphate. ATP is bound by residues glutamine 249–lysine 260 and serine 275. Residues aspartate 340, aspartate 355, and asparagine 357 each coordinate Mg(2+). A 1D-myo-inositol 1,3,4-trisphosphate-binding site is contributed by asparagine 357.

This sequence belongs to the ITPK1 family. As to quaternary structure, monomer. The cofactor is Mg(2+). As to expression, expressed in seedling roots, cotyledons, rosette leaves, cauline leaves, stems, flowers, siliques and seeds.

The catalysed reaction is 1D-myo-inositol 3,4,5,6-tetrakisphosphate + ATP = 1D-myo-inositol 1,3,4,5,6-pentakisphosphate + ADP + H(+). It catalyses the reaction 1D-myo-inositol 1,3,4-trisphosphate + ATP = 1D-myo-inositol 1,3,4,5-tetrakisphosphate + ADP + H(+). It carries out the reaction 1D-myo-inositol 1,3,4-trisphosphate + ATP = 1D-myo-inositol 1,3,4,6-tetrakisphosphate + ADP + H(+). In terms of biological role, kinase that can phosphorylate various inositol polyphosphate such as Ins(3,4,5,6)P4 or Ins(1,3,4)P3. Phosphorylates Ins(3,4,5,6)P4 to form InsP5. This reaction is thought to have regulatory importance, since Ins(3,4,5,6)P4 is an inhibitor of plasma membrane Ca(2+)-activated Cl(-) channels, while Ins(1,3,4,5,6)P5 is not. Also phosphorylates Ins(1,3,4)P3 or a racemic mixture of Ins(1,4,6)P3 and Ins(3,4,6)P3 to form InsP4. Ins(1,3,4,6)P4 is an essential molecule in the hexakisphosphate (InsP6) pathway. Plays a role in seed coat development and lipid polyester barrier formation. In Arabidopsis thaliana (Mouse-ear cress), this protein is Inositol-tetrakisphosphate 1-kinase 2 (ITPK2).